We begin with the raw amino-acid sequence, 246 residues long: uncharacterized protein (246 aa).

This is an uncharacterized protein from Dictyostelium discoideum (Social amoeba).